We begin with the raw amino-acid sequence, 430 residues long: 3-phosphoshikimate 1-carboxyvinyltransferase (430 aa).

The 3-phosphoshikimate site is built by lysine 23, serine 24, and arginine 28. Lysine 23 provides a ligand contact to phosphoenolpyruvate. Glycine 95 and arginine 123 together coordinate phosphoenolpyruvate. 3-phosphoshikimate is bound by residues serine 169, glutamine 171, aspartate 315, and lysine 342. Glutamine 171 is a binding site for phosphoenolpyruvate. Aspartate 315 functions as the Proton acceptor in the catalytic mechanism. Phosphoenolpyruvate is bound by residues arginine 346 and arginine 388.

Belongs to the EPSP synthase family. In terms of assembly, monomer.

It is found in the cytoplasm. The enzyme catalyses 3-phosphoshikimate + phosphoenolpyruvate = 5-O-(1-carboxyvinyl)-3-phosphoshikimate + phosphate. Its pathway is metabolic intermediate biosynthesis; chorismate biosynthesis; chorismate from D-erythrose 4-phosphate and phosphoenolpyruvate: step 6/7. Catalyzes the transfer of the enolpyruvyl moiety of phosphoenolpyruvate (PEP) to the 5-hydroxyl of shikimate-3-phosphate (S3P) to produce enolpyruvyl shikimate-3-phosphate and inorganic phosphate. The sequence is that of 3-phosphoshikimate 1-carboxyvinyltransferase from Streptococcus pyogenes serotype M1.